The chain runs to 620 residues: Leucine-rich repeat and immunoglobulin-like domain-containing nogo receptor-interacting protein 1 (620 aa).

Residues 1 to 41 (MQVSKRMLAGGVRSMPSPLLACWQPILLLVLGSVLSGSATG) form the signal peptide. Cystine bridges form between Cys42-Cys48 and Cys46-Cys57. Positions 42-71 (CPPRCECSAQDRAVLCHRKRFVAVPEGIPT) constitute an LRRNT domain. Residues 42 to 561 (CPPRCECSAQ…FDIKTLIIAT (520 aa)) are Extracellular-facing. LRR repeat units lie at residues 72-93 (ETRL…EFAS), 96-117 (HLEE…AFNN), 120-141 (NLRT…VFTG), 144-165 (NLTK…MFQD), 168-189 (NLKS…AFSG), 192-213 (SLEQ…ALSH), 216-237 (GLIV…SFKR), 264-285 (NLTS…AVRH), 288-309 (YLRF…MLHE), 312-333 (RLQE…AFRG), and 336-357 (YLRV…VFHS). An N-linked (GlcNAc...) asparagine glycan is attached at Asn144. Asn202 carries N-linked (GlcNAc...) asparagine glycosylation. N-linked (GlcNAc...) asparagine glycans are attached at residues Asn264, Asn274, and Asn293. Asn341 carries an N-linked (GlcNAc...) asparagine glycan. The region spanning 369-423 (NPLACDCRLLWVFRRRWRLNFNRQQPTCATPEFVQGKEFKDFPDVLLPNYFTCRR) is the LRRCT domain. 3 cysteine pairs are disulfide-bonded: Cys373-Cys396, Cys375-Cys421, and Cys446-Cys497. Residues 411-513 (PDVLLPNYFT…GNDSMPAHLH (103 aa)) form the Ig-like C2-type domain. Asn492, Asn505, Asn526, and Asn542 each carry an N-linked (GlcNAc...) asparagine glycan. Residues 562-582 (TMGFISFLGVVLFCLVLLFLW) traverse the membrane as a helical segment. Over 583–620 (SRGKGNTKHNIEIEYVPRKSDAGISSADAPRKFNMKMI) the chain is Cytoplasmic. At Ser602 the chain carries Phosphoserine.

As to quaternary structure, homotetramer. Forms a ternary complex with RTN4R/NGFR and RTN4R/TNFRSF19. Interacts with NGRF and MYT1L. Interacts with RTN4R. In terms of processing, N-glycosylated. Contains predominantly high-mannose glycans. Expressed exclusively in the central nervous system. Highest level in the in amygdala, hippocampus, thalamus and cerebral cortex. In the rest of the brain a basal expression seems to be always present. Up-regulated in substantia nigra neurons from Parkinson disease patients.

Its subcellular location is the cell membrane. Functional component of the Nogo receptor signaling complex (RTN4R/NGFR) in RhoA activation responsible for some inhibition of axonal regeneration by myelin-associated factors. Is also an important negative regulator of oligodentrocyte differentiation and axonal myelination. Acts in conjunction with RTN4 and RTN4R in regulating neuronal precursor cell motility during cortical development. This Homo sapiens (Human) protein is Leucine-rich repeat and immunoglobulin-like domain-containing nogo receptor-interacting protein 1 (LINGO1).